Consider the following 400-residue polypeptide: D(3) dopamine receptor (400 aa).

The Extracellular portion of the chain corresponds to 1–32; the sequence is MASLSQLSGHLNYTCGAENSTGASQARPHAYY. 2 N-linked (GlcNAc...) asparagine glycosylation sites follow: Asn12 and Asn19. A helical transmembrane segment spans residues 33–55; the sequence is ALSYCALILAIVFGNGLVCMAVL. At 56 to 65 the chain is on the cytoplasmic side; it reads KERALQTTTN. The chain crosses the membrane as a helical span at residues 66-88; sequence YLVVSLAVADLLVATLVMPWVVY. The Extracellular portion of the chain corresponds to 89–104; it reads LEVTGGVWNFSRICCD. Residue Asn97 is glycosylated (N-linked (GlcNAc...) asparagine). An intrachain disulfide couples Cys103 to Cys181. Residues 105 to 126 traverse the membrane as a helical segment; the sequence is VFVTLDVMMCTASILNLCAISI. Asp110 serves as a coordination point for eticlopride. Residues 127-149 lie on the Cytoplasmic side of the membrane; the sequence is DRYTAVVMPVHYQHGTGQSSCRR. Residues 150-170 form a helical membrane-spanning segment; the sequence is VALMITAVWVLAFAVSCPLLF. The Extracellular portion of the chain corresponds to 171 to 187; the sequence is GFNTTGDPTVCSISNPD. Asn173 is a glycosylation site (N-linked (GlcNAc...) asparagine). The chain crosses the membrane as a helical span at residues 188–209; sequence FVIYSSVVSFYLPFGVTVLVYA. Residues 210 to 329 are Cytoplasmic-facing; sequence RIYVVLKQRR…VPLREKKATQ (120 aa). The helical transmembrane segment at 330-351 threads the bilayer; it reads MVAIVLGAFIVCWLPFFLTHVL. Eticlopride contacts are provided by Phe345 and His349. At 352 to 366 the chain is on the extracellular side; sequence NTHCQTCHVSPELYS. Cys355 and Cys358 are joined by a disulfide. The helical transmembrane segment at 367-386 threads the bilayer; sequence ATTWLGYVNSALNPVIYTTF. At 387 to 400 the chain is on the cytoplasmic side; the sequence is NIEFRKAFLKILSC.

Belongs to the G-protein coupled receptor 1 family. Interacts with CLIC6. Interacts with GRK4. Interacts with PALM. Interacts with FLNA (via filamin repeat 21); increases PKA-mediated phosphorylation of FLNA. Post-translationally, phosphorylated by GRK4 (GRK4-alpha and GRK4-gamma). In terms of processing, palmitoylated. In terms of tissue distribution, brain.

It is found in the cell membrane. Its function is as follows. Dopamine receptor whose activity is mediated by G proteins which inhibit adenylyl cyclase. Promotes cell proliferation. This chain is D(3) dopamine receptor, found in Homo sapiens (Human).